The chain runs to 206 residues: LexA repressor (206 aa).

The segment at residues 29 to 49 is a DNA-binding region (H-T-H motif); the sequence is VREICEAVGLRSTSTVHGHLA. Residues S130 and K167 each act as for autocatalytic cleavage activity in the active site.

Belongs to the peptidase S24 family. Homodimer.

It catalyses the reaction Hydrolysis of Ala-|-Gly bond in repressor LexA.. Functionally, represses a number of genes involved in the response to DNA damage (SOS response), including recA and lexA. In the presence of single-stranded DNA, RecA interacts with LexA causing an autocatalytic cleavage which disrupts the DNA-binding part of LexA, leading to derepression of the SOS regulon and eventually DNA repair. The sequence is that of LexA repressor from Alkaliphilus oremlandii (strain OhILAs) (Clostridium oremlandii (strain OhILAs)).